An 86-amino-acid polypeptide reads, in one-letter code: Hepcidin-1 (86 aa).

Residues M1–A22 form the signal peptide. The propeptide occupies V23 to F59. Intrachain disulfides connect C68-C84, C71-C74, C72-C80, and C75-C83.

It belongs to the hepcidin family.

The protein localises to the secreted. Its function is as follows. Seems to act as a signaling molecule involved in the maintenance of iron homeostasis. Seems to be required in conjunction with HFE to regulate both intestinal iron absorption and iron storage in macrophages. May also have antimicrobial activity. The protein is Hepcidin-1 (hamp1) of Salmo salar (Atlantic salmon).